A 410-amino-acid chain; its full sequence is Arginine deiminase (410 aa).

The active-site Amidino-cysteine intermediate is cysteine 398.

This sequence belongs to the arginine deiminase family. Homodimer.

It is found in the cytoplasm. It carries out the reaction L-arginine + H2O = L-citrulline + NH4(+). It functions in the pathway amino-acid degradation; L-arginine degradation via ADI pathway; carbamoyl phosphate from L-arginine: step 1/2. The chain is Arginine deiminase (arcA) from Mycoplasmopsis arginini (Mycoplasma arginini).